A 78-amino-acid chain; its full sequence is D-alanyl carrier protein (78 aa).

The Carrier domain maps to 1 to 77; the sequence is MDLKEQIVEI…KVVAKVESLI (77 aa). S35 carries the post-translational modification O-(pantetheine 4'-phosphoryl)serine.

It belongs to the DltC family. Post-translationally, 4'-phosphopantetheine is transferred from CoA to a specific serine of apo-DCP.

The protein localises to the cytoplasm. It participates in cell wall biogenesis; lipoteichoic acid biosynthesis. Its function is as follows. Carrier protein involved in the D-alanylation of lipoteichoic acid (LTA). The loading of thioester-linked D-alanine onto DltC is catalyzed by D-alanine--D-alanyl carrier protein ligase DltA. The DltC-carried D-alanyl group is further transferred to cell membrane phosphatidylglycerol (PG) by forming an ester bond, probably catalyzed by DltD. D-alanylation of LTA plays an important role in modulating the properties of the cell wall in Gram-positive bacteria, influencing the net charge of the cell wall. This is D-alanyl carrier protein from Leuconostoc mesenteroides subsp. mesenteroides (strain ATCC 8293 / DSM 20343 / BCRC 11652 / CCM 1803 / JCM 6124 / NCDO 523 / NBRC 100496 / NCIMB 8023 / NCTC 12954 / NRRL B-1118 / 37Y).